Here is a 305-residue protein sequence, read N- to C-terminus: Putative lipid kinase SAR0780 (305 aa).

The 137-residue stretch at 3 to 139 folds into the DAGKc domain; the sequence is NKYTHGVLFY…YDVIKINNQY (137 aa). ATP is bound by residues serine 44, 74–80, and threonine 101; that span reads GDGTVNE. Serine 220, aspartate 223, and glutamate 225 together coordinate Mg(2+). The Proton acceptor role is filled by glutamate 281.

The protein belongs to the diacylglycerol/lipid kinase family. Mg(2+) serves as cofactor.

May catalyze the ATP-dependent phosphorylation of lipids other than diacylglycerol (DAG). In fact, is not able to exhibit diacylglycerol kinase activity in vitro. The chain is Putative lipid kinase SAR0780 from Staphylococcus aureus (strain MRSA252).